The following is a 508-amino-acid chain: Small ribosomal subunit protein mS47 (508 aa).

The protein belongs to the enoyl-CoA hydratase/isomerase family. Mitochondrion-specific ribosomal protein mS47 subfamily. In terms of assembly, component of the mitochondrial small ribosomal subunit (mt-SSU). Mature N.crassa 74S mitochondrial ribosomes consist of a small (37S) and a large (54S) subunit. The 37S small subunit contains a 16S ribosomal RNA (16S mt-rRNA) and 32 different proteins. The 54S large subunit contains a 23S rRNA (23S mt-rRNA) and 42 different proteins. mS47 forms a protuberance of the N.crassa mitoribosome and retains a solvent-exposed cavity liekly capable of accommodating a substrate, in accordance with it being an active enzyme as well as an integral constituent of the mitoribosome.

It is found in the mitochondrion. It carries out the reaction 3-hydroxy-2-methylpropanoyl-CoA + H2O = 3-hydroxy-2-methylpropanoate + CoA + H(+). In terms of biological role, component of the mitochondrial ribosome (mitoribosome), a dedicated translation machinery responsible for the synthesis of mitochondrial genome-encoded proteins, including at least some of the essential transmembrane subunits of the mitochondrial respiratory chain. The mitoribosomes are attached to the mitochondrial inner membrane and translation products are cotranslationally integrated into the membrane. mS47 has enzymatic activity in vitro, and is able to catalyze the specific hydrolysis of 3-hydroxyisobutyryl-CoA (HIBYL-CoA). However, because the turnover rate of mS47 is only a fraction of that of the homologous mammalian enzyme, the physiological function of this activity remains unclear. The polypeptide is Small ribosomal subunit protein mS47 (ehd3) (Neurospora crassa (strain ATCC 24698 / 74-OR23-1A / CBS 708.71 / DSM 1257 / FGSC 987)).